The chain runs to 165 residues: Choriogonadotropin subunit beta 3 (165 aa).

Positions Met-1–Ala-20 are cleaved as a signal peptide. Cystine bridges form between Cys-29/Cys-77, Cys-43/Cys-92, Cys-46/Cys-130, Cys-54/Cys-108, Cys-58/Cys-110, and Cys-113/Cys-120. Residues Asn-33 and Asn-50 are each glycosylated (N-linked (GlcNAc...) asparagine). Residues Asp-131 to Gln-165 form a disordered region. 4 O-linked (GalNAc...) serine glycosylation sites follow: Ser-141, Ser-147, Ser-152, and Ser-158. Residues Ala-143–Leu-154 show a composition bias toward pro residues.

It belongs to the glycoprotein hormones subunit beta family. In terms of assembly, heterodimer of a common alpha chain identical in LH, FSH, TSH and HCG and a unique beta chain distinct in each of the hormones. In terms of tissue distribution, high expression in the placenta throughout pregnancy.

It localises to the secreted. In terms of biological role, beta subunit of the human chorionic gonadotropin (hCG). hCG is a complex glycoprotein composed of two glycosylated subunits alpha and beta which are non-covalently associated. The alpha subunit is identical to those in the pituitary gonadotropin hormones (LH, FSH and TSH). The beta subunits are distinct in each of the hormones and confer receptor and biological specificity. Has an essential role in pregnancy and maternal adaptation. Stimulates the ovaries to synthesize the steroids that are essential for the maintenance of pregnancy. This chain is Choriogonadotropin subunit beta 3 (CGB3), found in Homo sapiens (Human).